The chain runs to 105 residues: uncharacterized protein (105 aa).

Residues 33–100 (LYALDAGTTD…SEDLRVLVVF (68 aa)) form the Cupin type-2 domain.

This is an uncharacterized protein from Streptomyces coelicolor (strain ATCC BAA-471 / A3(2) / M145).